The sequence spans 85 residues: Probable dolichol-phosphate mannosyltransferase subunit 3 (85 aa).

The next 2 membrane-spanning stretches (helical) occupy residues valine 13–isoleucine 33 and alanine 37–phenylalanine 57.

It belongs to the DPM3 family.

It is found in the endoplasmic reticulum membrane. It functions in the pathway protein modification; protein glycosylation. Functionally, stabilizer subunit of the dolichol-phosphate-mannose synthase complex. The protein is Probable dolichol-phosphate mannosyltransferase subunit 3 of Caenorhabditis briggsae.